The chain runs to 581 residues: Putative ABC transporter ATP-binding protein MM_1996 (581 aa).

The ABC transporter 1 domain maps to 10-250 (IEIRDLWYTY…LEVFHRLGLR (241 aa)). 44-51 (GPTGCGKS) contacts ATP. The tract at residues 287–309 (GDYPASPGRKEKTSSPGWSSENN) is disordered. Residues 300–309 (SSPGWSSENN) are compositionally biased toward polar residues. Residues 313–541 (VSVRDLWSGY…IDILRKASLT (229 aa)) form the ABC transporter 2 domain. An ATP-binding site is contributed by 346–353 (GTNGSGKS).

It belongs to the ABC transporter superfamily.

The protein localises to the cell membrane. Functionally, probably part of an ABC transporter complex. Responsible for energy coupling to the transport system. The sequence is that of Putative ABC transporter ATP-binding protein MM_1996 from Methanosarcina mazei (strain ATCC BAA-159 / DSM 3647 / Goe1 / Go1 / JCM 11833 / OCM 88) (Methanosarcina frisia).